The primary structure comprises 290 residues: Putative phosphoenolpyruvate synthase regulatory protein (290 aa).

Residue 170-177 participates in ADP binding; sequence GVSRCGKT.

The protein belongs to the pyruvate, phosphate/water dikinase regulatory protein family. PSRP subfamily.

The enzyme catalyses [pyruvate, water dikinase] + ADP = [pyruvate, water dikinase]-phosphate + AMP + H(+). It catalyses the reaction [pyruvate, water dikinase]-phosphate + phosphate + H(+) = [pyruvate, water dikinase] + diphosphate. In terms of biological role, bifunctional serine/threonine kinase and phosphorylase involved in the regulation of the phosphoenolpyruvate synthase (PEPS) by catalyzing its phosphorylation/dephosphorylation. The sequence is that of Putative phosphoenolpyruvate synthase regulatory protein (ydiA) from Enterobacter agglomerans (Erwinia herbicola).